The primary structure comprises 1157 residues: Pesticidal crystal protein Cry9Ca (1157 aa).

Belongs to the delta endotoxin family.

Its function is as follows. Promotes colloidosmotic lysis by binding to the midgut epithelial cells of Lepidoptera larvae. Has a fairly broad spectrum of activity against members of the Pyralidae, Plutellidae, Sphingidae and Noctuidae families. It was the first insecticidal crystal protein characterized with activity against cutworms. No activity is observed against some beetles, such as the Colorado potato beetle. This is Pesticidal crystal protein Cry9Ca (cry9Ca) from Bacillus thuringiensis subsp. tolworthi.